The primary structure comprises 243 residues: Vesicle-associated membrane protein-associated protein B/C (243 aa).

Ala2 carries the N-acetylalanine modification. Residues 2-222 (AKVEQVLSLE…PTGKEEGLST (221 aa)) lie on the Cytoplasmic side of the membrane. The region spanning 7 to 124 (VLSLEPQHEL…MDSKLRCVFE (118 aa)) is the MSP domain. Phosphoserine is present on Ser146. A Glycyl lysine isopeptide (Lys-Gly) (interchain with G-Cter in SUMO1) cross-link involves residue Lys147. Residue Thr150 is modified to Phosphothreonine. 5 positions are modified to phosphoserine: Ser156, Ser158, Ser159, Ser160, and Ser206. The stretch at 159–196 (SSLDDTEVKKVMEECKRLQGEVQRLREENKQFKEEDGL) forms a coiled coil. A helical; Anchor for type IV membrane protein membrane pass occupies residues 223–243 (RLLALVVLFFIVGVIIGKIAL).

It belongs to the VAMP-associated protein (VAP) (TC 9.B.17) family. Homodimer, and heterodimer with VAPA. Interacts with VAMP1 and VAMP2. Interacts (via MSP domain) with ZFYVE27. Interacts with RMDN3. Interacts with KIF5A in a ZFYVE27-dependent manner. Interacts (via MSP domain) with STARD3 (via phospho-FFAT motif). Interacts with STARD3NL (via FFAT motif). Interacts with CERT1. Interacts with PLEKHA3 and SACM1L to form a ternary complex. Interacts with VPS13A (via FFAT motif). Interacts with RB1CC1 (via phosphorylated FFAT motif), MIGA2 (via phosphorylated FFAT motif), RMDN3 (via phosphorylated FFAT motif), OSBPL1A (via FFAT motif), KCNB1 (via phosphorylated FFAT motif) and KCNB2 (via phosphorylated FFAT motif). Interacts (via MSP domain) with WDR44 (via FFAT motif); the interactions connect the endoplasmic reticulum (ER) with the endosomal tubule. As to quaternary structure, (Microbial infection) Interacts (via MSP domain) with hepatitis C virus (HCV) non-structural protein 5A (via disordered domain D3). Interacts with HCV RNA-directed RNA polymerase. In terms of tissue distribution, ubiquitous. Isoform 1 predominates.

It localises to the endoplasmic reticulum membrane. In terms of biological role, endoplasmic reticulum (ER)-anchored protein that mediates the formation of contact sites between the ER and endosomes via interaction with FFAT motif-containing proteins such as STARD3 or WDR44. Interacts with STARD3 in a FFAT motif phosphorylation dependent manner. Via interaction with WDR44 participates in neosynthesized protein export. Participates in the endoplasmic reticulum unfolded protein response (UPR) by inducing ERN1/IRE1 activity. Involved in cellular calcium homeostasis regulation. This chain is Vesicle-associated membrane protein-associated protein B/C, found in Homo sapiens (Human).